The sequence spans 410 residues: Chlorobenzene dioxygenase, ferredoxin reductase component (410 aa).

4–35 contacts FAD; it reads HVAIIGNGVAGFTTAQALRAEGFEGRISLIGN. 145-173 contacts NAD(+); the sequence is RLVIAGGGLIGCEVATTARKLGLAVTILE.

Belongs to the bacterial ring-hydroxylating dioxygenase ferredoxin reductase family. As to quaternary structure, this dioxygenase system consists of four proteins: the two subunits of the oxygenase component (TecA1 and TecA2), a ferredoxin (TecA3) and a ferredoxin reductase (TecA4). FAD is required as a cofactor.

The catalysed reaction is 2 reduced [2Fe-2S]-[ferredoxin] + NAD(+) + H(+) = 2 oxidized [2Fe-2S]-[ferredoxin] + NADH. The protein operates within aromatic compound metabolism. Functionally, part of the chlorobenzene dioxygenase system that catalyzes the dihydroxylation of a range of aromatic compounds, including chlorinated benzenes and toluenes, and dinuclear aromatics such as biphenyl and dibenzo-p-dioxin. This chain is Chlorobenzene dioxygenase, ferredoxin reductase component, found in Cupriavidus sp. (strain PS12).